Reading from the N-terminus, the 100-residue chain is Cell division topological specificity factor (100 aa).

It belongs to the MinE family.

Prevents the cell division inhibition by proteins MinC and MinD at internal division sites while permitting inhibition at polar sites. This ensures cell division at the proper site by restricting the formation of a division septum at the midpoint of the long axis of the cell. The polypeptide is Cell division topological specificity factor (Blochmanniella floridana).